Consider the following 355-residue polypeptide: WAT1-related protein At1g25270 (355 aa).

A run of 10 helical transmembrane segments spans residues 4–24 (VVAMVAVQFIFAGMFILFKIT), 33–53 (VLVAYRLSFATIFMLPLALIF), 65–85 (LLLLAFVSGLLGAAIPNILYL), 94–114 (TFSAASSIISPLITLVLGLVF), 134–154 (LLGACGALVFVFYKGIEIHIW), 175–195 (VSILGVLMVLGSNVSTSLWLL), 207–227 (LYWNTSLMNGVGSLVCVIIAL), 244–264 (LLATLYSGIVVSGMVVPLVAW), 272–292 (LFVTVFSPIRLVIVALIGSFA), and 297–317 (LHLGSIIGAMIMVGGVYLVVW). The EamA 1 domain maps to 12-142 (FIFAGMFILF…TLLGACGALV (131 aa)). The 107-residue stretch at 210-316 (NTSLMNGVGS…IMVGGVYLVV (107 aa)) folds into the EamA 2 domain.

This sequence belongs to the drug/metabolite transporter (DMT) superfamily. Plant drug/metabolite exporter (P-DME) (TC 2.A.7.4) family.

Its subcellular location is the membrane. This chain is WAT1-related protein At1g25270, found in Arabidopsis thaliana (Mouse-ear cress).